A 345-amino-acid chain; its full sequence is NADH-ubiquinone oxidoreductase chain 2 (345 aa).

Transmembrane regions (helical) follow at residues methionine 1–methionine 21, phenylalanine 60–leucine 80, proline 110–isoleucine 130, isoleucine 149–glycine 169, methionine 179–isoleucine 196, leucine 200–threonine 222, threonine 240–phenylalanine 260, asparagine 274–leucine 294, and threonine 323–methionine 343.

Belongs to the complex I subunit 2 family.

It localises to the mitochondrion inner membrane. The enzyme catalyses a ubiquinone + NADH + 5 H(+)(in) = a ubiquinol + NAD(+) + 4 H(+)(out). Core subunit of the mitochondrial membrane respiratory chain NADH dehydrogenase (Complex I) that is believed to belong to the minimal assembly required for catalysis. Complex I functions in the transfer of electrons from NADH to the respiratory chain. The immediate electron acceptor for the enzyme is believed to be ubiquinone. This chain is NADH-ubiquinone oxidoreductase chain 2 (MT-ND2), found in Varanus melinus (Quince monitor lizard).